The following is a 355-amino-acid chain: Probable low-specificity L-threonine aldolase 2 (355 aa).

Lysine 211 carries the N6-(pyridoxal phosphate)lysine modification.

The protein belongs to the threonine aldolase family. The cofactor is pyridoxal 5'-phosphate. In terms of tissue distribution, expressed in roots, leaf vasculature and flowers.

It carries out the reaction L-threonine = acetaldehyde + glycine. It catalyses the reaction L-allo-threonine = acetaldehyde + glycine. It participates in amino-acid degradation; L-threonine degradation via aldolase pathway; acetaldehyde and glycine from L-threonine: step 1/1. Its function is as follows. Threonine aldolase involved in threonine degradation to glycine. May play a role in the removal of L-allo-threonine. The sequence is that of Probable low-specificity L-threonine aldolase 2 (THA2) from Arabidopsis thaliana (Mouse-ear cress).